The primary structure comprises 307 residues: Regulating synaptic membrane exocytosis protein 3 (307 aa).

Residues 86–120 form a disordered region; the sequence is STETGIAVEMRSRVTRQGSRESTDGSTNSNSSEGT. Residues 109-119 show a composition bias toward polar residues; it reads DGSTNSNSSEG. Positions 155–273 constitute a C2 domain; that stretch reads PMGDVHIAIM…DLSAVVTGWY (119 aa). A phosphoserine mark is found at Ser294 and Ser297.

Binds PPFIA3. Does not bind RAB3. In terms of tissue distribution, expressed exclusively in brain with significant levels in cortex, cerebellum and olfactory bulb. Detected at lower level in hippocampus.

The protein resides in the synapse. Its function is as follows. Regulates synaptic membrane exocytosis. In Rattus norvegicus (Rat), this protein is Regulating synaptic membrane exocytosis protein 3 (Rims3).